Reading from the N-terminus, the 469-residue chain is E3 ubiquitin-protein ligase TRAIP (469 aa).

The RING-type zinc-finger motif lies at 7-50 (CTICSDFFDHSRDVAAIHCGHTFHLQCLIQWFETAPSRTCPQCR). 2 coiled-coil regions span residues 70–177 (EENV…QSQR) and 201–280 (CVSL…TLNL). Residues 211 to 469 (LKEARKASGE…QAKLDTFLWS (259 aa)) form an interaction with CYLD region. A Glycyl lysine isopeptide (Lys-Gly) (interchain with G-Cter in SUMO2) cross-link involves residue K304. A PIP-box motif is present at residues 460–469 (QAKLDTFLWS).

This sequence belongs to the TRAIP family. In terms of assembly, interacts (via PIP-box) with PCNA. Binds TRAF1, TRAF2, TRAF3, TRAF5 and TRAF6 is part of the receptor-TRAF signaling complex. May interact with CYLD; the C-terminus interacts with CYLD, however the interaction was not detected with the full-length protein. Interacts with POLK and POLN. Interacts with UIMC1. Sumoylated; sumoylation is required for nuclear localization. Sumoylation increases protein stability, possibly by preventing ubiquitination. In terms of processing, autoubiquitinated.

The protein localises to the nucleus. It localises to the nucleoplasm. The protein resides in the nucleolus. Its subcellular location is the chromosome. It is found in the cytoplasm. The protein localises to the perinuclear region. The catalysed reaction is S-ubiquitinyl-[E2 ubiquitin-conjugating enzyme]-L-cysteine + [acceptor protein]-L-lysine = [E2 ubiquitin-conjugating enzyme]-L-cysteine + N(6)-ubiquitinyl-[acceptor protein]-L-lysine.. It functions in the pathway protein modification; protein ubiquitination. In terms of biological role, E3 ubiquitin ligase required to protect genome stability in response to replication stress. Acts as a key regulator of interstrand cross-link repair, which takes place when both strands of duplex DNA are covalently tethered together, thereby blocking replication and transcription. Controls the choice between the two pathways of replication-coupled interstrand-cross-link repair by mediating ubiquitination of MCM7 subunit of the CMG helicase complex. Short ubiquitin chains on MCM7 promote recruitment of DNA glycosylase NEIL3. If the interstrand cross-link cannot be cleaved by NEIL3, the ubiquitin chains continue to grow on MCM7, promoting the unloading of the CMG helicase complex by the VCP/p97 ATPase, enabling the Fanconi anemia DNA repair pathway. Only catalyzes ubiquitination of MCM7 when forks converge. Also involved in the repair of covalent DNA-protein cross-links (DPCs) during DNA synthesis: promotes ubiquitination of DPCs, leading to their degradation by the proteasome. Has also been proposed to play a role in promoting translesion synthesis by mediating the assembly of 'Lys-63'-linked poly-ubiquitin chains on the Y-family polymerase POLN in order to facilitate bypass of DNA lesions and preserve genomic integrity. The function in translesion synthesis is however controversial. Acts as a regulator of the spindle assembly checkpoint. Also acts as a negative regulator of innate immune signaling by inhibiting activation of NF-kappa-B mediated by TNF. Negatively regulates TLR3/4- and RIG-I-mediated IRF3 activation and subsequent IFNB1 production and cellular antiviral response by promoting 'Lys-48'-linked polyubiquitination of TNK1 leading to its proteasomal degradation. This Homo sapiens (Human) protein is E3 ubiquitin-protein ligase TRAIP.